The following is a 235-amino-acid chain: MDSPTILTPRDWPSHPAYVHPDYRSSVKRGPTRPMIPLKERLRDQYAPVYGAEDLGPLDHDLTKNAVKNGEPLGERIVVTGRVLDEGGKPVRNTLVEVWQANAAGRYVHKVDQHDAPLDPNFLGAGRCMTDAEGRYRFLTIKPGAYPWGNHPNAWRPNHIHFSLFGDYFGSRLVTQMYFPGDPLLAYDPIFQGTPEAARDRLISRFSLDTTEEGHALGYEFDIVLRGRDATPMER.

Fe cation-binding residues include Tyr107, Tyr146, His159, and His161.

Belongs to the intradiol ring-cleavage dioxygenase family. As to quaternary structure, the enzyme is an oligomer of 12 copies of the alpha and beta chains. The cofactor is Fe(3+).

The enzyme catalyses 3,4-dihydroxybenzoate + O2 = 3-carboxy-cis,cis-muconate + 2 H(+). Its pathway is aromatic compound metabolism; beta-ketoadipate pathway; 3-carboxy-cis,cis-muconate from 3,4-dihydroxybenzoate: step 1/1. Plays an essential role in the utilization of numerous aromatic and hydroaromatic compounds via the beta-ketoadipate pathway. The chain is Protocatechuate 3,4-dioxygenase beta chain (pcaH) from Burkholderia cepacia (Pseudomonas cepacia).